A 370-amino-acid chain; its full sequence is DNA-directed RNA polymerase II subunit GRINL1A (370 aa).

Residues 1–20 (MSSLPRGFEPQTPEDLGQRS) form a disordered region. Positions 15–69 (DLGQRSLAELREMLKRQERLLRNVKFICKLPDKGKKISDAVTKLKAAIAEREEVR) form a coiled coil. The segment at 29–68 (KRQERLLRNVKFICKLPDKGKKISDAVTKLKAAIAEREEV) is important for transcription repressor activity. Disordered regions lie at residues 93-172 (DGDR…ASEG), 204-226 (DPTEHHSEGNRNPENLAGLWSGP), and 241-283 (KNPM…RRDR). Positions 101–131 (NSDQILDTSSPVPGCSSVANITSSQTTSRQQ) are enriched in polar residues. Basic and acidic residues predominate over residues 138 to 152 (RGGDAEAAEAEHTVS). The span at 155-170 (PTSSSGAPAPSSSQAS) shows a compositional bias: low complexity. A compositionally biased stretch (basic and acidic residues) spans 205 to 214 (PTEHHSEGNR). The tract at residues 228 to 299 (KKPHYMEVLE…TAARLLPLHH (72 aa)) is interaction with Pol II. Positions 254–266 (VLPSQPRDSSSAC) are enriched in polar residues. Ser-271 carries the phosphoserine modification. The important for transcription repressor activity stretch occupies residues 300-315 (LPTQLLSIEESLALQR). Positions 303–328 (QLLSIEESLALQRQQKQSYEEIQAKL) form a coiled coil. The interval 316-341 (QQKQSYEEIQAKLAAQKLAERLNIKM) is interaction with Pol II. The tract at residues 340–370 (KMQSYNPEGESSRKYREVRDEDDDQSSEDEF) is disordered. Residues 349–358 (ESSRKYREVR) are compositionally biased toward basic and acidic residues. Residues 359–370 (DEDDDQSSEDEF) show a composition bias toward acidic residues.

Belongs to the GRINL1 family. As to quaternary structure, component of the Pol II(G) complex, which contains the RNA polymerase II (Pol II) core complex subunits and POLR2M and appears to be an abundant form of Pol II. Post-translationally, dephosphorylated at Ser-271 by the PNUTS-PP1 complex, promoting RNA polymerase II transcription pause-release.

Its subcellular location is the nucleus. Functionally, appears to be a stable component of the Pol II(G) complex form of RNA polymerase II (Pol II). Pol II synthesizes mRNA precursors and many functional non-coding RNAs and is the central component of the basal RNA polymerase II transcription machinery. May play a role in Mediator complex-dependent regulation of transcription activation. Acts in vitro as a negative regulator of transcriptional activation; this repression is relieved by the Mediator complex, which restores Pol II(G) activator-dependent transcription to a level equivalent to that of Pol II. This chain is DNA-directed RNA polymerase II subunit GRINL1A (POLR2M), found in Bos taurus (Bovine).